The sequence spans 510 residues: Chromosomal replication initiator protein DnaA (510 aa).

Positions 1–107 (MTNDPGSGFA…VRIAPPPADD (107 aa)) are domain I, interacts with DnaA modulators. The tract at residues 107-169 (DDDDSVAAAV…ADTSASADGT (63 aa)) is domain II. Residues 119–168 (PGLEASPETSQEVSDEIDDFGENAPKSRQSWPTHFKKRSTDADTSASADG) form a disordered region. The segment at 170 to 386 (SLNRRYTFDT…GALIRVTAFA (217 aa)) is domain III, AAA+ region. ATP is bound by residues G214, G216, K217, and T218. Positions 387–510 (SLNKTPIDKA…TTRIRQRSKR (124 aa)) are domain IV, binds dsDNA.

The protein belongs to the DnaA family. Oligomerizes as a right-handed, spiral filament on DNA at oriC.

Its subcellular location is the cytoplasm. Plays an essential role in the initiation and regulation of chromosomal replication. ATP-DnaA binds to the origin of replication (oriC) to initiate formation of the DNA replication initiation complex once per cell cycle. Binds the DnaA box (a 9 base pair repeat at the origin) and separates the double-stranded (ds)DNA. Forms a right-handed helical filament on oriC DNA; dsDNA binds to the exterior of the filament while single-stranded (ss)DNA is stabiized in the filament's interior. The ATP-DnaA-oriC complex binds and stabilizes one strand of the AT-rich DNA unwinding element (DUE), permitting loading of DNA polymerase. After initiation quickly degrades to an ADP-DnaA complex that is not apt for DNA replication. Binds acidic phospholipids. This Mycobacterium ulcerans (strain Agy99) protein is Chromosomal replication initiator protein DnaA.